We begin with the raw amino-acid sequence, 498 residues long: L-proline--[L-prolyl-carrier protein] ligase (498 aa).

It belongs to the ATP-dependent AMP-binding enzyme family.

It carries out the reaction holo-[peptidyl-carrier protein] + L-proline + ATP = L-prolyl-[peptidyl-carrier protein] + AMP + diphosphate. Functionally, involved in the biosynthesis of pyoluteorin. Catalyzes the conversion of L-proline to L-prolyl-AMP and the transfer of the L-prolyl group to acyl carrier protein PltL. The chain is L-proline--[L-prolyl-carrier protein] ligase from Pseudomonas fluorescens (strain ATCC BAA-477 / NRRL B-23932 / Pf-5).